A 780-amino-acid polypeptide reads, in one-letter code: Cullin-5 (780 aa).

Residue Ser-34 is modified to Phosphoserine. Thr-210 is subject to Phosphothreonine. Positions 713-772 (LRTRKLYIQIMKMRKKISNAQLQTELVEILKNMFLPQKKMIKEQIEWLIEHKYIRRDESD) constitute a Cullin neddylation domain. Lys-724 is covalently cross-linked (Glycyl lysine isopeptide (Lys-Gly) (interchain with G-Cter in NEDD8)).

Belongs to the cullin family. As to quaternary structure, component of multiple cullin-5-RING E3 ubiquitin-protein ligase complexes (ECS complexes, also named CRL5 complexes) formed of CUL5, Elongin BC (ELOB and ELOC), RNF7/RBX2 and a variable SOCS box domain-containing protein as substrate-specific recognition component. CUL5-containing ECS complexes specifically contain RNF7/RBX2, and not RBX1, as catalytic subunit. Component of the ECS(ASB2) complex with the substrate recognition component ASB2. Component of the ECS(ASB6) complex with the substrate recognition component ASB6. Component of the ECS(ASB7) complex with the substrate recognition component ASB7. Component of the ECS(ASB9) complex with the substrate recognition component ASB9. Component of the ECS(ASB11) complex with the substrate recognition component ASB11. Component of the ECS(ASB12) complex with the substrate recognition component ASB12. Component of the ECS(LRRC41) complex with the substrate recognition component LRRC41. Component of the ECS(SOCS1) complex with the substrate recognition component SOCS1. Component of the ECS(SOCS2) complex with the substrate recognition component SOCS2. Component of the ECS(WSB1) complex with the substrate recognition subunit WSB1. Component of the ECS(SOCS3) complex with the substrate recognition component SOCS3. Component of the ECS(SOCS7) complex with the substrate recognition component SOCS7. Component of the ECS(SPSB1) complex with the substrate recognition component SPSB1. Component of the ECS(SPSB3) complex with the substrate recognition component SPSB3. Component of the ECS(SPSB2) complex with the substrate recognition component SPSB2. Component of the ECS(SPSB4) complex with the substrate recognition component SPSB4. Component of the ECS(RAB40) complex with the substrate recognition subunit RAB40A, RAB40B or RAB40C. Component of the ECS(KLHDC1) complex with the substrate recognition component KLHDC1. Component of the ECS(PCMTD1) complex with the substrate recognition subunit PCMTD1. May also form complexes containing RBX1 and ELOA or VHL; additional evidence is however required to confirm this result in vivo. Interacts (when neddylated) with ARIH2; leading to activate the E3 ligase activity of ARIH2. Interacts with ERCC6; the interaction is induced by DNA damaging agents or inhibitors of RNA polymerase II elongation. Interacts with ELOA (via the BC-box). Interacts (unneddylated form) with DCUN1D1, DCUN1D2, DCUN1D3, DCUN1D4 and DCUN1D5; these interactions promote the cullin neddylation. In terms of processing, neddylated; which enhances the ubiquitination activity of ECS complexes and prevents binding of the inhibitor CAND1. Deneddylated via its interaction with the COP9 signalosome (CSN). Kidney collecting tubules.

It localises to the nucleus. It functions in the pathway protein modification; protein ubiquitination. In terms of biological role, core component of multiple cullin-5-RING E3 ubiquitin-protein ligase complexes (ECS complexes, also named CRL5 complexes), which mediate the ubiquitination and subsequent proteasomal degradation of target proteins. Acts a scaffold protein that contributes to catalysis through positioning of the substrate and the ubiquitin-conjugating enzyme. The functional specificity of the E3 ubiquitin-protein ligase complex depends on the variable SOCS box-containing substrate recognition component. Acts as a key regulator of neuron positioning during cortex development: component of various SOCS-containing ECS complexes, such as the ECS(SOCS7) complex, that regulate reelin signaling by mediating ubiquitination and degradation of DAB1. ECS(SOCS1) seems to direct ubiquitination of JAK2. The ECS(SOCS2) complex mediates the ubiquitination and subsequent proteasomal degradation of phosphorylated EPOR and GHR. The ECS(SPSB3) complex catalyzes ubiquitination of nuclear CGAS. ECS(KLHDC1) complex is part of the DesCEND (destruction via C-end degrons) pathway and mediates ubiquitination and degradation of truncated SELENOS selenoprotein produced by failed UGA/Sec decoding, which ends with a glycine. The ECS(ASB9) complex mediates ubiquitination and degradation of CKB. As part of some ECS complex, promotes 'Lys-11'-linked ubiquitination and degradation of BTRC. As part of a multisubunit ECS complex, polyubiquitinates monoubiquitinated POLR2A. As part of the ECS(RAB40C) complex, mediates ANKRD28 ubiquitination and degradation, thereby regulating protein phosphatase 6 (PP6) complex activity and focal adhesion assembly during cell migration. As part of the ECS(RAB40A) complex, mediates RHOU 'Lys-48'-linked ubiquitination and degradation, thus inhibiting focal adhesion disassembly during cell migration. As part of the ECS(RAB40B) complex, mediates LIMA1/EPLIN and RAP2 ubiquitination, thereby regulating actin cytoskeleton dynamics and stress fiber formation during cell migration. May form a cell surface vasopressin receptor. This chain is Cullin-5 (CUL5), found in Oryctolagus cuniculus (Rabbit).